Reading from the N-terminus, the 425-residue chain is Serine--tRNA ligase (425 aa).

An L-serine-binding site is contributed by 230-232 (TAE). 261–263 (RSE) is a binding site for ATP. E284 is a binding site for L-serine. 348–351 (EISS) serves as a coordination point for ATP. Residue S384 participates in L-serine binding.

It belongs to the class-II aminoacyl-tRNA synthetase family. Type-1 seryl-tRNA synthetase subfamily. As to quaternary structure, homodimer. The tRNA molecule binds across the dimer.

It localises to the cytoplasm. It carries out the reaction tRNA(Ser) + L-serine + ATP = L-seryl-tRNA(Ser) + AMP + diphosphate + H(+). The enzyme catalyses tRNA(Sec) + L-serine + ATP = L-seryl-tRNA(Sec) + AMP + diphosphate + H(+). The protein operates within aminoacyl-tRNA biosynthesis; selenocysteinyl-tRNA(Sec) biosynthesis; L-seryl-tRNA(Sec) from L-serine and tRNA(Sec): step 1/1. Its function is as follows. Catalyzes the attachment of serine to tRNA(Ser). Is also able to aminoacylate tRNA(Sec) with serine, to form the misacylated tRNA L-seryl-tRNA(Sec), which will be further converted into selenocysteinyl-tRNA(Sec). In Streptococcus pyogenes serotype M3 (strain SSI-1), this protein is Serine--tRNA ligase.